Here is a 460-residue protein sequence, read N- to C-terminus: ATP synthase subunit beta (460 aa).

150-157 (GGAGVGKT) contacts ATP.

It belongs to the ATPase alpha/beta chains family. In terms of assembly, F-type ATPases have 2 components, CF(1) - the catalytic core - and CF(0) - the membrane proton channel. CF(1) has five subunits: alpha(3), beta(3), gamma(1), delta(1), epsilon(1). CF(0) has three main subunits: a(1), b(2) and c(9-12). The alpha and beta chains form an alternating ring which encloses part of the gamma chain. CF(1) is attached to CF(0) by a central stalk formed by the gamma and epsilon chains, while a peripheral stalk is formed by the delta and b chains.

It is found in the cell inner membrane. The catalysed reaction is ATP + H2O + 4 H(+)(in) = ADP + phosphate + 5 H(+)(out). In terms of biological role, produces ATP from ADP in the presence of a proton gradient across the membrane. The catalytic sites are hosted primarily by the beta subunits. The protein is ATP synthase subunit beta of Yersinia pestis bv. Antiqua (strain Angola).